Here is a 279-residue protein sequence, read N- to C-terminus: Pantothenate synthetase (279 aa).

Position 26 to 33 (26 to 33 (MGNLHEGH)) interacts with ATP. The Proton donor role is filled by His-33. Gln-57 provides a ligand contact to (R)-pantoate. Beta-alanine is bound at residue Gln-57. 144-147 (GKKD) is a binding site for ATP. Position 150 (Gln-150) interacts with (R)-pantoate. Residues Val-173 and 181 to 184 (LSSR) contribute to the ATP site.

This sequence belongs to the pantothenate synthetase family. Homodimer.

It localises to the cytoplasm. The enzyme catalyses (R)-pantoate + beta-alanine + ATP = (R)-pantothenate + AMP + diphosphate + H(+). It functions in the pathway cofactor biosynthesis; (R)-pantothenate biosynthesis; (R)-pantothenate from (R)-pantoate and beta-alanine: step 1/1. Its function is as follows. Catalyzes the condensation of pantoate with beta-alanine in an ATP-dependent reaction via a pantoyl-adenylate intermediate. The polypeptide is Pantothenate synthetase (Burkholderia cenocepacia (strain HI2424)).